A 583-amino-acid polypeptide reads, in one-letter code: Threonine--tRNA ligase (583 aa).

A catalytic region spans residues 185 to 478; sequence DHRKLGRELN…LVEHYGGAFP (294 aa). 3 residues coordinate Zn(2+): C278, H329, and H455.

It belongs to the class-II aminoacyl-tRNA synthetase family. Homodimer. It depends on Zn(2+) as a cofactor.

Its subcellular location is the cytoplasm. It catalyses the reaction tRNA(Thr) + L-threonine + ATP = L-threonyl-tRNA(Thr) + AMP + diphosphate + H(+). In terms of biological role, catalyzes the attachment of threonine to tRNA(Thr) in a two-step reaction: L-threonine is first activated by ATP to form Thr-AMP and then transferred to the acceptor end of tRNA(Thr). Also edits incorrectly charged L-seryl-tRNA(Thr). The sequence is that of Threonine--tRNA ligase from Borrelia recurrentis (strain A1).